A 200-amino-acid chain; its full sequence is Elongation factor Ts (200 aa).

An involved in Mg(2+) ion dislocation from EF-Tu region spans residues 80 to 83 (TDFV).

This sequence belongs to the EF-Ts family.

Its subcellular location is the cytoplasm. In terms of biological role, associates with the EF-Tu.GDP complex and induces the exchange of GDP to GTP. It remains bound to the aminoacyl-tRNA.EF-Tu.GTP complex up to the GTP hydrolysis stage on the ribosome. This is Elongation factor Ts from Caldanaerobacter subterraneus subsp. tengcongensis (strain DSM 15242 / JCM 11007 / NBRC 100824 / MB4) (Thermoanaerobacter tengcongensis).